We begin with the raw amino-acid sequence, 311 residues long: Pyrimidine-specific ribonucleoside hydrolase RihA (311 aa).

Residue H240 is part of the active site.

The protein belongs to the IUNH family. RihA subfamily.

Its function is as follows. Hydrolyzes cytidine or uridine to ribose and cytosine or uracil, respectively. The polypeptide is Pyrimidine-specific ribonucleoside hydrolase RihA (Salmonella arizonae (strain ATCC BAA-731 / CDC346-86 / RSK2980)).